Here is an 86-residue protein sequence, read N- to C-terminus: Putative membrane protein insertion efficiency factor (86 aa).

It belongs to the UPF0161 family.

It localises to the cell membrane. Functionally, could be involved in insertion of integral membrane proteins into the membrane. In Streptococcus pyogenes serotype M1, this protein is Putative membrane protein insertion efficiency factor.